Consider the following 336-residue polypeptide: Atypical chemokine receptor 1 (336 aa).

At 1–63 (MGNCLHQAEL…CNLLDDSSLP (63 aa)) the chain is on the extracellular side. Asparagine 16, asparagine 27, and asparagine 33 each carry an N-linked (GlcNAc...) asparagine glycan. Disulfide bonds link cysteine 51–cysteine 276 and cysteine 129–cysteine 195. A helical transmembrane segment spans residues 64–84 (FFILASVLGILASSTVLFLLF). Topologically, residues 85 to 95 (RPLFRWQLCPG) are cytoplasmic. A helical transmembrane segment spans residues 96–116 (WPVLAQLAVGSTLFSIVVPIL). Over 117–129 (APGLGNTRSSAPC) the chain is Extracellular. Residues 130 to 153 (SLGYCVWYGSAFAQALLLGCHASL) traverse the membrane as a helical segment. Topologically, residues 154 to 166 (GPKLGAGQVPGLT) are cytoplasmic. The chain crosses the membrane as a helical span at residues 167-187 (LGLSVGLWGAAALLTLPITLA). Residues 188–207 (SDASDGLCTPIYSTELKALQ) lie on the Extracellular side of the membrane. A helical transmembrane segment spans residues 208–228 (ATHTVACFAIFVLLPLGLFGA). Residues 229 to 244 (KGLKKVLGMGPGPWMN) lie on the Cytoplasmic side of the membrane. A helical transmembrane segment spans residues 245 to 265 (ILWVWFIFWWPHGVVLGLDFL). Topologically, residues 266-287 (VRSKLLLLPTCLAQQVLDLLLN) are extracellular. The helical transmembrane segment at 288 to 308 (LAEALAIVHCVATPLLLALFC) threads the bilayer. Over 309–336 (HQATRTLVPSLPLPERWSSPVDTLGSKS) the chain is Cytoplasmic.

This sequence belongs to the G-protein coupled receptor 1 family. Atypical chemokine receptor subfamily.

The protein resides in the early endosome. It is found in the recycling endosome. Its subcellular location is the membrane. In terms of biological role, atypical chemokine receptor that controls chemokine levels and localization via high-affinity chemokine binding that is uncoupled from classic ligand-driven signal transduction cascades, resulting instead in chemokine sequestration, degradation, or transcytosis. Also known as interceptor (internalizing receptor) or chemokine-scavenging receptor or chemokine decoy receptor. Has a promiscuous chemokine-binding profile, interacting with inflammatory chemokines of both the CXC and the CC subfamilies but not with homeostatic chemokines. Acts as a receptor for chemokines including CCL2, CCL5, CCL7, CCL11, CCL13, CCL14, CCL17, CXCL5, CXCL6, IL8/CXCL8, CXCL11, GRO, RANTES, MCP-1 and TARC. May regulate chemokine bioavailability and, consequently, leukocyte recruitment through two distinct mechanisms: when expressed in endothelial cells, it sustains the abluminal to luminal transcytosis of tissue-derived chemokines and their subsequent presentation to circulating leukocytes; when expressed in erythrocytes, serves as blood reservoir of cognate chemokines but also as a chemokine sink, buffering potential surges in plasma chemokine levels. This Saguinus imperator (Emperor tamarin) protein is Atypical chemokine receptor 1 (ACKR1).